The primary structure comprises 416 residues: Serine/threonine-protein phosphatase PP2A-like PPG1 (416 aa).

The Mn(2+) site is built by D62, H64, D90, and N122. Catalysis depends on H123, which acts as the Proton donor. Mn(2+) contacts are provided by H173 and H248. Residues 363–391 are disordered; the sequence is EDTLQGKSVNGINFDDELSTSDDTSGSGG.

This sequence belongs to the PPP phosphatase family. PP-2A subfamily. Mn(2+) serves as cofactor.

The catalysed reaction is O-phospho-L-seryl-[protein] + H2O = L-seryl-[protein] + phosphate. It carries out the reaction O-phospho-L-threonyl-[protein] + H2O = L-threonyl-[protein] + phosphate. With respect to regulation, inhibited by okadaic acid, a specific inhibitor of serine/threonine phosphatases of types 1, 2A and 2B. Its function is as follows. Serine/threonine-protein phosphatase that plays an important role in controlling colony morphology, filament extension and agar invasion. Down-regulates expression of NRG1 and affects the expression of multiple filament-specific transcripts in response to serum and 37 degrees Celsius. Plays a crucial role in virulence in a mouse model of systemic candidiasis. In Candida albicans (strain SC5314 / ATCC MYA-2876) (Yeast), this protein is Serine/threonine-protein phosphatase PP2A-like PPG1.